The sequence spans 249 residues: Sugar fermentation stimulation protein homolog (249 aa).

Belongs to the SfsA family.

The chain is Sugar fermentation stimulation protein homolog from Synechococcus sp. (strain RCC307).